The chain runs to 233 residues: Large ribosomal subunit protein uL1 (233 aa).

It belongs to the universal ribosomal protein uL1 family. As to quaternary structure, part of the 50S ribosomal subunit.

Binds directly to 23S rRNA. The L1 stalk is quite mobile in the ribosome, and is involved in E site tRNA release. In terms of biological role, protein L1 is also a translational repressor protein, it controls the translation of the L11 operon by binding to its mRNA. This chain is Large ribosomal subunit protein uL1, found in Polynucleobacter asymbioticus (strain DSM 18221 / CIP 109841 / QLW-P1DMWA-1) (Polynucleobacter necessarius subsp. asymbioticus).